We begin with the raw amino-acid sequence, 872 residues long: Protein SCD5 (872 aa).

Disordered stretches follow at residues 1–98 (MSFD…SGGD) and 209–239 (PKPR…TGDQ). Over residues 48-85 (FWDQGSRSHSDTTLSYRNNHSNTAADNATNVSSPQKDN) the composition is skewed to polar residues. The KKRVK motif; Required for interaction with GLC7, endocytosis and actin cytoskeleton organization signature appears at 272-276 (KKVRF). 2 disordered regions span residues 280 to 321 (ITFQ…LDFT) and 338 to 358 (SGLV…KKVL). Composition is skewed to polar residues over residues 284 to 296 (DPPN…SNNS) and 339 to 348 (GLVSSLPSEQ). Tandem repeats lie at residues 405–424 (QLPL…HLVR), 439–458 (QTGL…YLMR), 479–498 (SGGL…YLMK), 534–545 (SPNITLPQSNQQ), 564–575 (SPQHTYSNNVRI), 593–604 (PPQNTLPQHQQS), 608–619 (SPQNTIPQHQRS), 623–634 (SPQNTFTQNQPI), 636–647 (SPQHTYSNNQAT), 650–661 (SPQNTYTNNQQQ), 683–694 (PPQHMYSNVQKQ), and 717–728 (SPQNAANSYFQS). The segment at 405–448 (QLPLEPLKPTATGSANHLVREEYNQGLHPSNGAIQTGLQPLKPT) is 3 X 20 AA approximate repeats. 2 positions are modified to phosphothreonine; by PRK1: T416 and T450. Positions 460 to 489 (HMEQPQSIKPSSTPETVTNSGGLQPLKPTA) are disordered. The span at 462–481 (EQPQSIKPSSTPETVTNSGG) shows a compositional bias: polar residues. T490 is subject to Phosphothreonine; by PRK1. Disordered stretches follow at residues 516–571 (QFTN…TYSN) and 591–620 (AFPP…QRSQ). Residues 534 to 728 (SPNITLPQSN…QNAANSYFQS (195 aa)) are 9 X 12 AA approximate repeats. Residue S564 is modified to Phosphoserine. A compositionally biased stretch (polar residues) spans 594-620 (PQNTLPQHQQSHLLSPQNTIPQHQRSQ). The tract at residues 649–681 (ISPQNTYTNNQQQPQHLPPPPPPRAQQQQQGAI) is disordered. A compositionally biased stretch (low complexity) spans 651–663 (PQNTYTNNQQQPQ). Over residues 697-727 (LVPTQPSYTNSPSIQSPNFLSPQNAANSYFQ) the composition is skewed to polar residues. Disordered regions lie at residues 697–758 (LVPT…ISSF) and 806–838 (NSDI…QFPF). The span at 728 to 745 (SLLSSSPSPNPTPSNAST) shows a compositional bias: low complexity. Composition is skewed to polar residues over residues 746-758 (VNGN…ISSF) and 806-815 (NSDIHSQPNK). Low complexity predominate over residues 823-835 (QQVHQQQQQQQQQ).

As to quaternary structure, interacts (via KKVRF motif) with phosphatase GLC7. Post-translationally, phosphorylation by PRK1 and/or AKL1 on Thr-416, Thr-450 and Thr-490 of repeats 1-1, 1-2 and/or 1-3 negatively regulates SCD5 function in endocytosis and actin cytoskeleton organization.

The protein localises to the membrane. Functionally, regulates both fluid phase and receptor-mediated endocytosis. Involved in vesicular transport at a late stage of the secretory pathway. Regulates actin cytoskeleton organization. In Saccharomyces cerevisiae (strain ATCC 204508 / S288c) (Baker's yeast), this protein is Protein SCD5 (SCD5).